Consider the following 270-residue polypeptide: ATP synthase subunit a (270 aa).

Helical transmembrane passes span 37-57, 98-118, 143-163, 208-228, and 239-259; these read NVHI…LGVF, IAPL…MDLV, DVNI…YYSI, LFGN…MLPW, and AIFH…LTIV.

The protein belongs to the ATPase A chain family. F-type ATPases have 2 components, CF(1) - the catalytic core - and CF(0) - the membrane proton channel. CF(1) has five subunits: alpha(3), beta(3), gamma(1), delta(1), epsilon(1). CF(0) has three main subunits: a(1), b(2) and c(9-12). The alpha and beta chains form an alternating ring which encloses part of the gamma chain. CF(1) is attached to CF(0) by a central stalk formed by the gamma and epsilon chains, while a peripheral stalk is formed by the delta and b chains.

It is found in the cell inner membrane. Functionally, key component of the proton channel; it plays a direct role in the translocation of protons across the membrane. The protein is ATP synthase subunit a of Vibrio cholerae serotype O1 (strain ATCC 39315 / El Tor Inaba N16961).